We begin with the raw amino-acid sequence, 827 residues long: Translation initiation factor IF-2 (827 aa).

The interval 49–205 (ALNREKEEKE…GAPDKKREWE (157 aa)) is disordered. 6 stretches are compositionally biased toward basic and acidic residues: residues 50 to 73 (LNREKEEKEKKEQEKKQVEQKAEA), 96 to 106 (RPREQRSDRPQ), 116 to 129 (PEPRDKDKGRRPGE), 137 to 150 (RPRDDRRRFDKERG), 157 to 168 (FGEKKERPPFPR), and 182 to 205 (EAPKGENKEPERRKGAPDKKREWE). Residues 326-495 (PRPPIVTVMG…LLVADLKELK (170 aa)) form the tr-type G domain. The interval 335–342 (GHVDHGKT) is G1. Residue 335-342 (GHVDHGKT) coordinates GTP. The tract at residues 360-364 (GITQH) is G2. The tract at residues 381–384 (DTPG) is G3. GTP contacts are provided by residues 381-385 (DTPGH) and 435-438 (NKID). The tract at residues 435–438 (NKID) is G4. Positions 471-473 (SAL) are G5.

The protein belongs to the TRAFAC class translation factor GTPase superfamily. Classic translation factor GTPase family. IF-2 subfamily.

The protein resides in the cytoplasm. In terms of biological role, one of the essential components for the initiation of protein synthesis. Protects formylmethionyl-tRNA from spontaneous hydrolysis and promotes its binding to the 30S ribosomal subunits. Also involved in the hydrolysis of GTP during the formation of the 70S ribosomal complex. The polypeptide is Translation initiation factor IF-2 (Carboxydothermus hydrogenoformans (strain ATCC BAA-161 / DSM 6008 / Z-2901)).